A 342-amino-acid polypeptide reads, in one-letter code: Trans-3-hydroxy-L-proline dehydratase (342 aa).

The active-site Proton acceptor is the Ser-90. Substrate contacts are provided by residues 91 to 92 (GS), Asp-252, and 257 to 258 (GT).

It belongs to the proline racemase family.

The enzyme catalyses trans-3-hydroxy-L-proline = 1-pyrroline-2-carboxylate + H2O. Catalyzes the dehydration of trans-3-hydroxy-L-proline (t3LHyp) to Delta(1)-pyrroline-2-carboxylate (Pyr2C). Is likely involved in a degradation pathway that converts t3LHyp to L-proline. Displays neither proline racemase activity nor 4-hydroxyproline 2-epimerase activity. This chain is Trans-3-hydroxy-L-proline dehydratase, found in Allorhizobium ampelinum (strain ATCC BAA-846 / DSM 112012 / S4) (Agrobacterium vitis (strain S4)).